The following is a 275-amino-acid chain: Succinate dehydrogenase [ubiquinone] iron-sulfur subunit, mitochondrial (275 aa).

A mitochondrion-targeting transit peptide spans 1–24 (MFSRRIQVLSPFLKHFVNRNARMM). Positions 57-137 (PEVKPKLQKY…PTKIYPLPHC (81 aa)) constitute a 2Fe-2S ferredoxin-type domain. The [2Fe-2S] cluster site is built by Cys98, Cys103, Cys106, and Cys118. The 4Fe-4S ferredoxin-type domain maps to 178-208 (DRAKLDGLYECILCACCSTSCPSYWWNSEEY). Positions 188, 191, and 194 each coordinate [4Fe-4S] cluster. Cys198 is a binding site for [3Fe-4S] cluster. Residue Trp203 participates in a ubiquinone binding. [3Fe-4S] cluster contacts are provided by Cys245 and Cys251. Residue Cys255 participates in [4Fe-4S] cluster binding.

It belongs to the succinate dehydrogenase/fumarate reductase iron-sulfur protein family. In terms of assembly, component of complex II composed of four subunits: a flavoprotein (FP), an iron-sulfur protein (IP), and a cytochrome b composed of a large and a small subunit. [2Fe-2S] cluster serves as cofactor. The cofactor is [3Fe-4S] cluster. [4Fe-4S] cluster is required as a cofactor.

Its subcellular location is the mitochondrion inner membrane. The enzyme catalyses a quinone + succinate = fumarate + a quinol. Its pathway is carbohydrate metabolism; tricarboxylic acid cycle; fumarate from succinate (eukaryal route): step 1/1. Its function is as follows. Iron-sulfur protein (IP) subunit of succinate dehydrogenase (SDH) that is involved in complex II of the mitochondrial electron transport chain and is responsible for transferring electrons from succinate to ubiquinone (coenzyme Q). The protein is Succinate dehydrogenase [ubiquinone] iron-sulfur subunit, mitochondrial (sdh2) of Schizosaccharomyces pombe (strain 972 / ATCC 24843) (Fission yeast).